The following is a 367-amino-acid chain: Coiled-coil domain-containing protein 34 (367 aa).

Phosphoserine is present on serine 55. 3 disordered regions span residues 77–105 (FPFGADDSEGEDEEALDEDARESESKVES), 191–228 (QKKNKQERKEREQKINKEMEEKEAKKREKEHLQEKAKE), and 310–349 (YNPIPWKPIHMPPPKEAKSGPGKKSKRHAASQPLPSSSLA). Positions 82–97 (DDSEGEDEEALDEDAR) are enriched in acidic residues. 2 coiled-coil regions span residues 87–108 (EDEEALDEDARESESKVESLEG) and 153–280 (RLQQ…AKNK). A compositionally biased stretch (basic and acidic residues) spans 197-228 (ERKEREQKINKEMEEKEAKKREKEHLQEKAKE). Residues 339 to 349 (ASQPLPSSSLA) are compositionally biased toward low complexity.

As to expression, expressed in testis and sperm.

The protein localises to the cell projection. It localises to the cilium. The protein resides in the flagellum. In terms of biological role, involved in spermatogenesis. Has a probable role in anterograde intraflagellar transport which is essential for the formation of sperm flagella. This chain is Coiled-coil domain-containing protein 34 (Ccdc34), found in Mus musculus (Mouse).